Reading from the N-terminus, the 159-residue chain is GDP-mannose mannosyl hydrolase (159 aa).

Substrate-binding positions include 2–3 (FL), phenylalanine 8, and arginine 36. Residues 13–153 (RSTPLVSLDF…SRAYFLAEKR (141 aa)) form the Nudix hydrolase domain. Residues glycine 49, glutamate 69, and glutamine 122 each contribute to the Mg(2+) site. The Nudix box motif lies at 50-71 (GRVQKDETLEAAFERLTMAELG).

As to quaternary structure, homodimer. Requires Mg(2+) as cofactor.

The enzyme catalyses GDP-alpha-D-mannose + H2O = D-mannose + GDP + H(+). Functionally, hydrolyzes both GDP-mannose and GDP-glucose. Could participate in the regulation of cell wall biosynthesis by influencing the concentration of GDP-mannose or GDP-glucose in the cell. Might also be involved in the biosynthesis of the slime polysaccharide colanic acid. The chain is GDP-mannose mannosyl hydrolase from Escherichia coli (strain K12).